The chain runs to 115 residues: DNA-binding protein TV0008 (115 aa).

Residues 18-37 (LQRQAMQRQMAEEEEKQREI) form a disordered region.

It belongs to the PDCD5 family.

This is DNA-binding protein TV0008 from Thermoplasma volcanium (strain ATCC 51530 / DSM 4299 / JCM 9571 / NBRC 15438 / GSS1).